The chain runs to 202 residues: Nucleoside triphosphate pyrophosphatase (202 aa).

The active-site Proton acceptor is the aspartate 79.

Belongs to the Maf family. The cofactor is a divalent metal cation.

The protein localises to the cytoplasm. The catalysed reaction is a ribonucleoside 5'-triphosphate + H2O = a ribonucleoside 5'-phosphate + diphosphate + H(+). The enzyme catalyses a 2'-deoxyribonucleoside 5'-triphosphate + H2O = a 2'-deoxyribonucleoside 5'-phosphate + diphosphate + H(+). Nucleoside triphosphate pyrophosphatase. May have a dual role in cell division arrest and in preventing the incorporation of modified nucleotides into cellular nucleic acids. The protein is Nucleoside triphosphate pyrophosphatase of Nitrobacter winogradskyi (strain ATCC 25391 / DSM 10237 / CIP 104748 / NCIMB 11846 / Nb-255).